A 584-amino-acid polypeptide reads, in one-letter code: A-type ATP synthase subunit A (584 aa).

233-240 (GPFGSGKT) contributes to the ATP binding site.

It belongs to the ATPase alpha/beta chains family. Has multiple subunits with at least A(3), B(3), C, D, E, F, H, I and proteolipid K(x).

Its subcellular location is the cell membrane. It catalyses the reaction ATP + H2O + 4 H(+)(in) = ADP + phosphate + 5 H(+)(out). Its function is as follows. Component of the A-type ATP synthase that produces ATP from ADP in the presence of a proton gradient across the membrane. The A chain is the catalytic subunit. The chain is A-type ATP synthase subunit A from Methanobrevibacter smithii (strain ATCC 35061 / DSM 861 / OCM 144 / PS).